The chain runs to 571 residues: Glutamate--tRNA ligase (571 aa).

The short motif at 38-48 (PSPTGFMHIGG) is the 'HIGH' region element. The short motif at 316–320 (KLSKR) is the 'KMSKS' region element. Lysine 319 contacts ATP.

The protein belongs to the class-I aminoacyl-tRNA synthetase family. Glutamate--tRNA ligase type 1 subfamily. As to quaternary structure, monomer.

It localises to the cytoplasm. It catalyses the reaction tRNA(Glu) + L-glutamate + ATP = L-glutamyl-tRNA(Glu) + AMP + diphosphate. Catalyzes the attachment of glutamate to tRNA(Glu) in a two-step reaction: glutamate is first activated by ATP to form Glu-AMP and then transferred to the acceptor end of tRNA(Glu). The chain is Glutamate--tRNA ligase from Sorangium cellulosum (strain So ce56) (Polyangium cellulosum (strain So ce56)).